The chain runs to 409 residues: Argininosuccinate synthase (409 aa).

ATP contacts are provided by residues 12–20 (AYSGGLDTS) and alanine 39. Tyrosine 91 is an L-citrulline binding site. Position 121 (glycine 121) interacts with ATP. L-aspartate-binding residues include threonine 123, asparagine 127, and aspartate 128. Asparagine 127 is a binding site for L-citrulline. The L-citrulline site is built by arginine 131, serine 180, serine 189, glutamate 265, and tyrosine 277.

This sequence belongs to the argininosuccinate synthase family. Type 1 subfamily. As to quaternary structure, homotetramer.

It is found in the cytoplasm. It catalyses the reaction L-citrulline + L-aspartate + ATP = 2-(N(omega)-L-arginino)succinate + AMP + diphosphate + H(+). The protein operates within amino-acid biosynthesis; L-arginine biosynthesis; L-arginine from L-ornithine and carbamoyl phosphate: step 2/3. The sequence is that of Argininosuccinate synthase from Buchnera aphidicola subsp. Baizongia pistaciae (strain Bp).